The chain runs to 297 residues: GTPase Era (297 aa).

An Era-type G domain is found at 7 to 174 (RSGFVSIIGR…VEVVHGFIPA (168 aa)). A G1 region spans residues 15-22 (GRPNVGKS). 15 to 22 (GRPNVGKS) is a GTP binding site. Residues 41 to 45 (QTTRN) form a G2 region. Residues 62 to 65 (DTPG) are G3. Residues 62–66 (DTPGI) and 124–127 (NKID) each bind GTP. Residues 124 to 127 (NKID) form a G4 region. The interval 153–155 (VSA) is G5. Positions 205-282 (THDEVPYSVA…FLELFVRVSK (78 aa)) constitute a KH type-2 domain.

The protein belongs to the TRAFAC class TrmE-Era-EngA-EngB-Septin-like GTPase superfamily. Era GTPase family. As to quaternary structure, monomer.

Its subcellular location is the cytoplasm. It localises to the cell inner membrane. Its function is as follows. An essential GTPase that binds both GDP and GTP, with rapid nucleotide exchange. Plays a role in 16S rRNA processing and 30S ribosomal subunit biogenesis and possibly also in cell cycle regulation and energy metabolism. The chain is GTPase Era from Geotalea uraniireducens (strain Rf4) (Geobacter uraniireducens).